A 541-amino-acid polypeptide reads, in one-letter code: MGSQEVLGQAARLASSGLLLQVLFRLITFVLNAFILRFLSKEIVGIVNVRLTLLYSTTTFLAREAFRRACLSGGAQRDWSQTLNLLWLTVPLGIFWSSCLGWVWLQLLEVPDPDVVPYYGTGVLFFGLSAVVELLGEPFWVLAQAHMFVKLKVLAESMSVILRSVLTALLVLWLPHWGLYIFSLAQLLYTTVLVLCYAIYLIQLLRSPESAKQLTLPVSRVTQLLPSISRSRAFVNWKEAGLAWSFFKQSFLKQILTEGERYVMTFLNVLNFGDQGVYDIVNNLGSLVARLIFQPVEESFYLFFAKVLEREKDASLQKQDDVAVAAAVLESLLKLALLTGLTMTVFGFAYSQLALDIYGGAMLSSGSGPVLMRCYCLYVLLLAINGVTECFMFAAMSKEEVDRYNFTMLALSSSFLVLSYLLTSWCGSVGFIMANCFNMGIRITQSLSFIHHYFRESPHRPLAGLRLSPVLLGVFILSAGITSVSEAFLCCERGWPARLAHIAVGTICLGVTLGTAFLTETKLIHFLRTQLGRSRLSDKMT.

Helical transmembrane passes span 16–36 (SGLL…AFIL), 45–62 (GIVN…TFLA), 85–105 (LLWL…WVWL), 123–143 (VLFF…WVLA), 154–176 (LAES…WLPH), 187–207 (LLYT…LLRS), 335–355 (LALL…QLAL), 376–396 (CLYV…FAAM), 414–434 (SFLV…FIMA), 470–490 (VLLG…AFLC), and 499–519 (LAHI…AFLT).

It belongs to the RFT1 family.

The protein localises to the endoplasmic reticulum membrane. It participates in protein modification; protein glycosylation. Functionally, intramembrane glycolipid transporter that operates in the biosynthetic pathway of dolichol-linked oligosaccharides, the glycan precursors employed in protein asparagine (N)-glycosylation. The sequential addition of sugars to dolichol pyrophosphate produces dolichol-linked oligosaccharides containing fourteen sugars, including two GlcNAcs, nine mannoses and three glucoses. Once assembled, the oligosaccharide is transferred from the lipid to nascent proteins by oligosaccharyltransferases. The assembly of dolichol-linked oligosaccharides begins on the cytosolic side of the endoplasmic reticulum membrane and finishes in its lumen. RFT1 could mediate the translocation of the cytosolically oriented intermediate DolPP-GlcNAc2Man5, produced by ALG11, into the ER lumen where dolichol-linked oligosaccharides assembly continues. However, the intramembrane lipid transporter activity could not be confirmed in vitro. The sequence is that of Man(5)GlcNAc(2)-PP-dolichol translocation protein RFT1 from Mus musculus (Mouse).